A 228-amino-acid polypeptide reads, in one-letter code: MSTPVIKCLNVVKGYSEGPQKVEVLRGVNLQIEQGQHIAIVGASGSGKSTLLNVLGGLDKPDAGEVWVNEKAFSSLNDNKRGLVRNQELGFVYQFHHLLPEFTALENVMMPCLIAGVKKAQAKQKAEALLDKVGLSHRLDHKPAELSGGERQRVAIARALVNEPACVLMDEPTGNLDTENAESIQSLMKELSAQLQTSFIVVTHDLVLANTMNQVYRLEAGVLNKQGQ.

Positions 6–228 (IKCLNVVKGY…EAGVLNKQGQ (223 aa)) constitute an ABC transporter domain. 42–49 (GASGSGKS) serves as a coordination point for ATP.

The protein belongs to the ABC transporter superfamily. Lipoprotein translocase (TC 3.A.1.125) family. In terms of assembly, the complex is composed of two ATP-binding proteins (LolD) and two transmembrane proteins (LolC and LolE).

Its subcellular location is the cell inner membrane. In terms of biological role, part of the ABC transporter complex LolCDE involved in the translocation of mature outer membrane-directed lipoproteins, from the inner membrane to the periplasmic chaperone, LolA. Responsible for the formation of the LolA-lipoprotein complex in an ATP-dependent manner. This is Lipoprotein-releasing system ATP-binding protein LolD from Saccharophagus degradans (strain 2-40 / ATCC 43961 / DSM 17024).